The following is an 896-amino-acid chain: Desmocollin-3 (896 aa).

A signal peptide spans 1–26 (MAAPGSGAPCAELCRQLLLTLVVFSF). Residues 27-134 (ACEACKKEIF…KETVLRRSKR (108 aa)) constitute a propeptide that is removed on maturation. Cadherin domains are found at residues 135–242 (RWAP…HPIF), 243–354 (TEAV…LPTF), 355–471 (RQNA…GPEC), 472–579 (SPEV…EILQ), and 580–690 (DYLV…ILGK). The Extracellular segment spans residues 135-690 (RWAPIPCSMQ…RRSADVILGK (556 aa)). Asn-165 is a glycosylation site (N-linked (GlcNAc...) asparagine). 3 N-linked (GlcNAc...) asparagine glycosylation sites follow: Asn-391, Asn-546, and Asn-629. Residues 691–711 (WAILAILLGIALLFSILLTLV) form a helical membrane-spanning segment. Over 712 to 896 (CGIVSARNKK…AALAKTCTKR (185 aa)) the chain is Cytoplasmic.

In terms of assembly, may form homodimers. Interacts with DSG1; there is evidence to suggest that the interaction promotes cell-cell adhesion of keratinocytes. As to expression, expressed in stratified epithelia only, such as the epidermis, tongue, esophagus and rumen (at protein level).

The protein localises to the cell membrane. Its subcellular location is the cell junction. The protein resides in the desmosome. It is found in the cytoplasm. A component of desmosome cell-cell junctions which are required for positive regulation of cellular adhesion. Required for cell-cell adhesion in the epidermis, as a result required for the maintenance of the dermal cohesion and the dermal barrier function. Required for cell-cell adhesion of epithelial cell layers surrounding the telogen hair club, as a result plays an important role in telogen hair shaft anchorage. Essential for successful completion of embryo compaction and embryo development. This is Desmocollin-3 (DSC3) from Bos taurus (Bovine).